The chain runs to 519 residues: Protein nucleotidyltransferase YdiU (519 aa).

Residues glycine 100, glycine 102, arginine 103, lysine 123, aspartate 135, glycine 136, arginine 193, and arginine 200 each contribute to the ATP site. Aspartate 270 acts as the Proton acceptor in catalysis. 2 residues coordinate Mg(2+): asparagine 271 and aspartate 280. Residue aspartate 280 coordinates ATP.

It belongs to the SELO family. Mg(2+) is required as a cofactor. Mn(2+) serves as cofactor.

It catalyses the reaction L-seryl-[protein] + ATP = 3-O-(5'-adenylyl)-L-seryl-[protein] + diphosphate. The catalysed reaction is L-threonyl-[protein] + ATP = 3-O-(5'-adenylyl)-L-threonyl-[protein] + diphosphate. The enzyme catalyses L-tyrosyl-[protein] + ATP = O-(5'-adenylyl)-L-tyrosyl-[protein] + diphosphate. It carries out the reaction L-histidyl-[protein] + UTP = N(tele)-(5'-uridylyl)-L-histidyl-[protein] + diphosphate. It catalyses the reaction L-seryl-[protein] + UTP = O-(5'-uridylyl)-L-seryl-[protein] + diphosphate. The catalysed reaction is L-tyrosyl-[protein] + UTP = O-(5'-uridylyl)-L-tyrosyl-[protein] + diphosphate. Functionally, nucleotidyltransferase involved in the post-translational modification of proteins. It can catalyze the addition of adenosine monophosphate (AMP) or uridine monophosphate (UMP) to a protein, resulting in modifications known as AMPylation and UMPylation. This Xylella fastidiosa (strain 9a5c) protein is Protein nucleotidyltransferase YdiU.